Consider the following 243-residue polypeptide: tRNA (guanine-N(1)-)-methyltransferase (243 aa).

S-adenosyl-L-methionine contacts are provided by residues Gly111 and Ile130–Leu135.

Belongs to the RNA methyltransferase TrmD family. As to quaternary structure, homodimer.

It localises to the cytoplasm. The catalysed reaction is guanosine(37) in tRNA + S-adenosyl-L-methionine = N(1)-methylguanosine(37) in tRNA + S-adenosyl-L-homocysteine + H(+). Functionally, specifically methylates guanosine-37 in various tRNAs. The polypeptide is tRNA (guanine-N(1)-)-methyltransferase (Acholeplasma laidlawii (strain PG-8A)).